The following is a 278-amino-acid chain: Large ribosomal subunit protein uL2 (278 aa).

Residues 222-278 are disordered; sequence GVVMNPIDHPHGGGEGRTSGGRHPVTPWGKPTKGKKTRSNKSTNKFILISRHKRKKK.

It belongs to the universal ribosomal protein uL2 family. Part of the 50S ribosomal subunit. Forms a bridge to the 30S subunit in the 70S ribosome.

In terms of biological role, one of the primary rRNA binding proteins. Required for association of the 30S and 50S subunits to form the 70S ribosome, for tRNA binding and peptide bond formation. It has been suggested to have peptidyltransferase activity; this is somewhat controversial. Makes several contacts with the 16S rRNA in the 70S ribosome. This Afipia carboxidovorans (strain ATCC 49405 / DSM 1227 / KCTC 32145 / OM5) (Oligotropha carboxidovorans) protein is Large ribosomal subunit protein uL2.